Reading from the N-terminus, the 1486-residue chain is Chromosome partition protein MukB (1486 aa).

G34–S41 is a binding site for ATP. 3 coiled-coil regions span residues L326 to Q418, L444 to Q480, and R509 to V603. The segment at P666 to R783 is flexible hinge. Coiled coils occupy residues E835 to E923, E977 to A1115, and V1209 to V1265.

The protein belongs to the SMC family. MukB subfamily. In terms of assembly, homodimerization via its hinge domain. Binds to DNA via its C-terminal region. Interacts, and probably forms a ternary complex, with MukE and MukF via its C-terminal region. The complex formation is stimulated by calcium or magnesium. Interacts with tubulin-related protein FtsZ.

The protein localises to the cytoplasm. Its subcellular location is the nucleoid. Plays a central role in chromosome condensation, segregation and cell cycle progression. Functions as a homodimer, which is essential for chromosome partition. Involved in negative DNA supercoiling in vivo, and by this means organize and compact chromosomes. May achieve or facilitate chromosome segregation by condensation DNA from both sides of a centrally located replisome during cell division. The polypeptide is Chromosome partition protein MukB (Escherichia coli O7:K1 (strain IAI39 / ExPEC)).